The primary structure comprises 457 residues: Keratin, type II cytoskeletal 7 (457 aa).

The residue at position 2 (serine 2) is an N-acetylserine. Serine 2 carries the phosphoserine modification. The interval 2 to 84 (SIHFSSRSTA…DPTIQQVRQE (83 aa)) is head. Serine 7 is a glycosylation site (O-linked (GlcNAc) serine). Arginine 15 carries the dimethylated arginine; alternate modification. Arginine 15 is subject to Omega-N-methylarginine; alternate. Phosphoserine is present on residues serine 47 and serine 65. The interval 84–120 (EEREQIKTLNNKFASFIDKVRFLEQQNKMLETKWALL) is coil 1A. The IF rod domain maps to 85–397 (EREQIKTLNN…KLLEGEESRL (313 aa)). Threonine 91 bears the Phosphothreonine mark. Positions 121-138 (QEQKSAKSSQLPRIFEAQ) are linker 1. Residue lysine 124 forms a Glycyl lysine isopeptide (Lys-Gly) (interchain with G-Cter in SUMO2) linkage. The interval 139 to 230 (IAGLRQQLET…TLHETELAEL (92 aa)) is coil 1B. An N6-acetyllysine modification is found at lysine 173. Residues serine 211, serine 246, and serine 248 each carry the phosphoserine modification. The tract at residues 231–254 (QSQISDTSVVLSMDNSRSLDLDGI) is linker 12. The tract at residues 255 to 393 (IADVKAQYEE…ATYRKLLEGE (139 aa)) is coil 2. Residues lysine 259 and lysine 280 each participate in a glycyl lysine isopeptide (Lys-Gly) (interchain with G-Cter in SUMO2) cross-link. Threonine 283 is modified (phosphothreonine). Glycyl lysine isopeptide (Lys-Gly) (interchain with G-Cter in SUMO2) cross-links involve residues lysine 290 and lysine 325. Residues 394-457 (ESRLSGDGMG…TSTTRRGTHN (64 aa)) form a tail region.

This sequence belongs to the intermediate filament family. As to quaternary structure, heterotetramer of two type I and two type II keratins. Interacts with eukaryotic translation initiator factor 3 (eIF3) subunit EIF3S10. Interacts with GPER1. Post-translationally, arg-15 is dimethylated, probably to asymmetric dimethylarginine. In terms of tissue distribution, expressed in most simple epithelia tested including liver, lactating mammary gland, lung, kidney, stomach, duodenum, colon, oviduct, uterus, pancreas, epididymis, prostate, preputial gland and mesothelium, and in most stratified epithelia tested including dorsal skin, paw/toe, tail, tongue, cervix, forestomach, and bladder. Also expressed in Henle layer of the inner root sheath of whisker follicle.

In terms of biological role, blocks interferon-dependent interphase and stimulates DNA synthesis in cells. The polypeptide is Keratin, type II cytoskeletal 7 (Mus musculus (Mouse)).